Here is a 78-residue protein sequence, read N- to C-terminus: MAKPPVRKPKKKVCAFCKDKVTYVDYKDTNMLRKFISDRGKIRARRVTGNCTQHQRDVATAVKNSREMALLPYTSTAR.

Belongs to the bacterial ribosomal protein bS18 family. In terms of assembly, part of the 30S ribosomal subunit. Forms a tight heterodimer with protein bS6.

Its function is as follows. Binds as a heterodimer with protein bS6 to the central domain of the 16S rRNA, where it helps stabilize the platform of the 30S subunit. This Streptomyces avermitilis (strain ATCC 31267 / DSM 46492 / JCM 5070 / NBRC 14893 / NCIMB 12804 / NRRL 8165 / MA-4680) protein is Small ribosomal subunit protein bS18A.